The primary structure comprises 257 residues: uncharacterized protein (257 aa).

The chain crosses the membrane as a helical span at residues 7–27 (LFLCVSFLLITIFIGGGGFMN).

It belongs to the staphylococcal tandem lipoprotein family.

It is found in the cell membrane. This is an uncharacterized protein from Staphylococcus epidermidis (strain ATCC 12228 / FDA PCI 1200).